Here is a 71-residue protein sequence, read N- to C-terminus: Translation initiation factor IF-1 (71 aa).

Residues 1–71 (MANDVIEIEG…TKGRITYRFR (71 aa)) enclose the S1-like domain.

It belongs to the IF-1 family. Component of the 30S ribosomal translation pre-initiation complex which assembles on the 30S ribosome in the order IF-2 and IF-3, IF-1 and N-formylmethionyl-tRNA(fMet); mRNA recruitment can occur at any time during PIC assembly.

It is found in the cytoplasm. One of the essential components for the initiation of protein synthesis. Stabilizes the binding of IF-2 and IF-3 on the 30S subunit to which N-formylmethionyl-tRNA(fMet) subsequently binds. Helps modulate mRNA selection, yielding the 30S pre-initiation complex (PIC). Upon addition of the 50S ribosomal subunit IF-1, IF-2 and IF-3 are released leaving the mature 70S translation initiation complex. The polypeptide is Translation initiation factor IF-1 (Leuconostoc mesenteroides subsp. mesenteroides (strain ATCC 8293 / DSM 20343 / BCRC 11652 / CCM 1803 / JCM 6124 / NCDO 523 / NBRC 100496 / NCIMB 8023 / NCTC 12954 / NRRL B-1118 / 37Y)).